The primary structure comprises 178 residues: MINTLRELLSGKVAVAILGKTHGLKGELKLHPFTNFPEIIESLEEIFLYNEKTKQFMVATVENLRLADGYYIIKLNGVENVENARKFVGSKVYINKDELPNLSKDEYYFFEIVGSQVIDESGKVLGVVDEVIQTGSNDVIVVNKNKEDEILIPVIYDYIITLDKENKKIVVKVPEWLD.

The 75-residue stretch at 103–177 (SKDEYYFFEI…KIVVKVPEWL (75 aa)) folds into the PRC barrel domain.

The protein belongs to the RimM family. In terms of assembly, binds ribosomal protein uS19.

The protein localises to the cytoplasm. In terms of biological role, an accessory protein needed during the final step in the assembly of 30S ribosomal subunit, possibly for assembly of the head region. Essential for efficient processing of 16S rRNA. May be needed both before and after RbfA during the maturation of 16S rRNA. It has affinity for free ribosomal 30S subunits but not for 70S ribosomes. The protein is Ribosome maturation factor RimM of Thermosipho africanus (strain TCF52B).